The sequence spans 623 residues: Protein vein (623 aa).

The N-terminal stretch at 1–40 (MYAQHLRKWSLKTKKQLMPLILLIISYMLLLNTCVLSSSA) is a signal peptide. Disordered regions lie at residues 70–98 (IPLS…SSNN), 130–162 (DAGS…SMQK), 184–214 (AASS…NYSS), and 229–317 (PESM…QRYN). Low complexity-rich tracts occupy residues 72–98 (LSSD…SSNN) and 136–158 (PAQQ…QQQQ). N-linked (GlcNAc...) asparagine glycosylation is present at asparagine 76. An N-linked (GlcNAc...) asparagine glycan is attached at asparagine 211. Basic and acidic residues predominate over residues 233-248 (LEDRSPEQAARSRRDG). Asparagine 252 is a glycosylation site (N-linked (GlcNAc...) asparagine). Over residues 255–267 (RQQQRTGHRQQLQ) the composition is skewed to low complexity. The segment covering 305–316 (QRRKHQRKHQRY) has biased composition (basic residues). N-linked (GlcNAc...) asparagine glycans are attached at residues asparagine 350, asparagine 381, asparagine 424, asparagine 449, asparagine 521, and asparagine 574. One can recognise an Ig-like C2-type domain in the interval 457 to 542 (TKIFSKPSKA…AKNKASKAIA (86 aa)). Intrachain disulfides connect cysteine 478–cysteine 531, cysteine 566–cysteine 577, cysteine 571–cysteine 588, and cysteine 590–cysteine 599. Residues 561–599 (ASGIPCNFDYCFHNGTCRMIPDINEVYCRCPTEYFGNRC) form the EGF-like domain.

The protein resides in the secreted. Its function is as follows. Ligand for the EGF receptor. Seems to play a role in the global proliferation of wing disc cells and the larval patterning. Shows a strong synergistic genetic interaction with spi, suggesting a molecular interdependence. Required for the development of interveins cells. The polypeptide is Protein vein (vn) (Drosophila melanogaster (Fruit fly)).